The sequence spans 185 residues: ATP synthase subunit b 2 (185 aa).

A disordered region spans residues 1–23 (MAEGHGDAKGATAHTAADGGHKA). Over residues 9-18 (KGATAHTAAD) the composition is skewed to low complexity. A helical membrane pass occupies residues 32-51 (TFASQLVSLTIAFVALYLIV).

The protein belongs to the ATPase B chain family. In terms of assembly, F-type ATPases have 2 components, F(1) - the catalytic core - and F(0) - the membrane proton channel. F(1) has five subunits: alpha(3), beta(3), gamma(1), delta(1), epsilon(1). F(0) has three main subunits: a(1), b(2) and c(10-14). The alpha and beta chains form an alternating ring which encloses part of the gamma chain. F(1) is attached to F(0) by a central stalk formed by the gamma and epsilon chains, while a peripheral stalk is formed by the delta and b chains.

It is found in the cell inner membrane. Functionally, f(1)F(0) ATP synthase produces ATP from ADP in the presence of a proton or sodium gradient. F-type ATPases consist of two structural domains, F(1) containing the extramembraneous catalytic core and F(0) containing the membrane proton channel, linked together by a central stalk and a peripheral stalk. During catalysis, ATP synthesis in the catalytic domain of F(1) is coupled via a rotary mechanism of the central stalk subunits to proton translocation. Its function is as follows. Component of the F(0) channel, it forms part of the peripheral stalk, linking F(1) to F(0). The b'-subunit is a diverged and duplicated form of b found in plants and photosynthetic bacteria. The sequence is that of ATP synthase subunit b 2 (atpF2) from Rhodopseudomonas palustris (strain HaA2).